Here is a 427-residue protein sequence, read N- to C-terminus: METFCFRVSFWVALLGCVISDNPESHSTNLSTHVDDFTTFRGTEFSLVVTTHRPTNLALPSNGSMHNYCPQQTKITSAFKYINTVISCTIFIVGMVGNATLLRIIYQNKCMRNGPNALIASLALGDLIYVVIDLPINVFKLLAGRWPFENHDFGVFLCKLFPFLQKSSVGITVLNLCALSVDRYRAVASWSRVQGIGIPLVTAIEIVSIWILSFILAIPEAIGFVMVPFEYKGEEHKTCMLNATSKFMEFYQDVKDWWLFGFYFCMPLVCTAIFYTLMTCEMLNRRNGSLRIALSEHLKQRREVAKTVFCLVVIFALCWFPLHLSRILKKTVYDEMDKNRCELLSFLLLMDYIGINLATMNSCINPIALYFVSKKFKNCFQSCLCCCCYQSKSLMTSVPMNGTSIQWKNHEQNNHNTERSSHKDSIN.

Residues 1–20 (METFCFRVSFWVALLGCVIS) form the signal peptide. Residues 21 to 80 (DNPESHSTNLSTHVDDFTTFRGTEFSLVVTTHRPTNLALPSNGSMHNYCPQQTKITSAFK) are Extracellular-facing. Residues asparagine 29 and asparagine 62 are each glycosylated (N-linked (GlcNAc...) asparagine). Residues 81-102 (YINTVISCTIFIVGMVGNATLL) form a helical membrane-spanning segment. At 103–112 (RIIYQNKCMR) the chain is on the cytoplasmic side. Residues 113 to 132 (NGPNALIASLALGDLIYVVI) form a helical membrane-spanning segment. At 133-159 (DLPINVFKLLAGRWPFENHDFGVFLCK) the chain is on the extracellular side. Cysteines 158 and 239 form a disulfide. The chain crosses the membrane as a helical span at residues 160–181 (LFPFLQKSSVGITVLNLCALSV). At 182–205 (DRYRAVASWSRVQGIGIPLVTAIE) the chain is on the cytoplasmic side. The helical transmembrane segment at 206-229 (IVSIWILSFILAIPEAIGFVMVPF) threads the bilayer. Residues 230–256 (EYKGEEHKTCMLNATSKFMEFYQDVKD) lie on the Extracellular side of the membrane. The chain crosses the membrane as a helical span at residues 257 to 278 (WWLFGFYFCMPLVCTAIFYTLM). The Cytoplasmic segment spans residues 279-306 (TCEMLNRRNGSLRIALSEHLKQRREVAK). Residues 307–328 (TVFCLVVIFALCWFPLHLSRIL) traverse the membrane as a helical segment. Topologically, residues 329 to 347 (KKTVYDEMDKNRCELLSFL) are extracellular. The chain crosses the membrane as a helical span at residues 348–372 (LLMDYIGINLATMNSCINPIALYFV). Residues 373–427 (SKKFKNCFQSCLCCCCYQSKSLMTSVPMNGTSIQWKNHEQNNHNTERSSHKDSIN) lie on the Cytoplasmic side of the membrane. Residue serine 425 is modified to Phosphoserine.

This sequence belongs to the G-protein coupled receptor 1 family. Endothelin receptor subfamily. EDNRA sub-subfamily. As to quaternary structure, interacts with HDAC7 and KAT5.

The protein resides in the cell membrane. Receptor for endothelin-1. Mediates its action by association with G proteins that activate a phosphatidylinositol-calcium second messenger system. The rank order of binding affinities for ET-A is: ET1 &gt; ET2 &gt;&gt; ET3. In Sus scrofa (Pig), this protein is Endothelin-1 receptor.